Consider the following 326-residue polypeptide: Malate dehydrogenase (326 aa).

11–17 is an NAD(+) binding site; that stretch reads GAAGQIG. Substrate is bound by residues arginine 92 and arginine 98. NAD(+)-binding positions include asparagine 105, glutamine 112, and 129-131; that span reads VGN. Substrate-binding residues include asparagine 131 and arginine 162. The active-site Proton acceptor is the histidine 187.

The protein belongs to the LDH/MDH superfamily. MDH type 2 family.

It carries out the reaction (S)-malate + NAD(+) = oxaloacetate + NADH + H(+). Functionally, catalyzes the reversible oxidation of malate to oxaloacetate. The sequence is that of Malate dehydrogenase from Leptospira interrogans serogroup Icterohaemorrhagiae serovar Lai (strain 56601).